Here is a 489-residue protein sequence, read N- to C-terminus: Beta-1,3-glucosyltransferase (489 aa).

A topological domain (cytoplasmic) is located at residue Met-1. Residues 2-22 (RPPALLALFSCSAAFALMSEE) form a helical; Signal-anchor for type II membrane protein membrane-spanning segment. At 23 to 489 (IKEKVTPSQD…ETQKDPREEL (467 aa)) the chain is on the lumenal side. N-linked (GlcNAc...) asparagine glycosylation occurs at Asn-78. Positions 486–489 (REEL) match the Prevents secretion from ER motif.

It belongs to the glycosyltransferase 31 family.

The protein resides in the endoplasmic reticulum membrane. It functions in the pathway protein modification; protein glycosylation. In terms of biological role, O-glucosyltransferase that transfers glucose toward fucose with a beta-1,3 linkage. Specifically glucosylates O-linked fucosylglycan on TSP type-1 domains of proteins, thereby contributing to elongation of O-fucosylglycan. The sequence is that of Beta-1,3-glucosyltransferase from Mus musculus (Mouse).